An 88-amino-acid chain; its full sequence is Large ribosomal subunit protein bL27 (88 aa).

A disordered region spans residues 1–23; that stretch reads MAHKKGTGSTRNGRDSNAQRLGV. A compositionally biased stretch (polar residues) spans 7–19; it reads TGSTRNGRDSNAQ.

Belongs to the bacterial ribosomal protein bL27 family.

This chain is Large ribosomal subunit protein bL27 (rpmA), found in Synechococcus elongatus (strain ATCC 33912 / PCC 7942 / FACHB-805) (Anacystis nidulans R2).